A 956-amino-acid chain; its full sequence is Bifunctional glutamine synthetase adenylyltransferase/adenylyl-removing enzyme (956 aa).

The interval methionine 1–glutamate 450 is adenylyl removase. The interval glutamate 456–glutamine 956 is adenylyl transferase.

Belongs to the GlnE family. It depends on Mg(2+) as a cofactor.

It catalyses the reaction [glutamine synthetase]-O(4)-(5'-adenylyl)-L-tyrosine + phosphate = [glutamine synthetase]-L-tyrosine + ADP. The enzyme catalyses [glutamine synthetase]-L-tyrosine + ATP = [glutamine synthetase]-O(4)-(5'-adenylyl)-L-tyrosine + diphosphate. In terms of biological role, involved in the regulation of glutamine synthetase GlnA, a key enzyme in the process to assimilate ammonia. When cellular nitrogen levels are high, the C-terminal adenylyl transferase (AT) inactivates GlnA by covalent transfer of an adenylyl group from ATP to specific tyrosine residue of GlnA, thus reducing its activity. Conversely, when nitrogen levels are low, the N-terminal adenylyl removase (AR) activates GlnA by removing the adenylyl group by phosphorolysis, increasing its activity. The regulatory region of GlnE binds the signal transduction protein PII (GlnB) which indicates the nitrogen status of the cell. The protein is Bifunctional glutamine synthetase adenylyltransferase/adenylyl-removing enzyme of Shewanella loihica (strain ATCC BAA-1088 / PV-4).